The chain runs to 2581 residues: Chromodomain-helicase-DNA-binding protein 8 (2581 aa).

Disordered regions lie at residues 22-114, 253-283, 349-392, 429-582, and 596-615; these read DDSF…QTST, VKGS…TQGE, QKIQ…SPGQ, ALSS…QVKR, and DEEE…PILP. Polar residues-rich tracts occupy residues 42 to 51 and 94 to 114; these read SLDSLDQMNQ and DYTT…QTST. A compositionally biased stretch (low complexity) spans 255–267; sequence GSAPAGNPGATGP. A compositionally biased stretch (pro residues) spans 355–370; sequence PQPPSSQPQPQQPPST. A Phosphoserine modification is found at Ser432. Basic and acidic residues-rich tracts occupy residues 445-462 and 493-516; these read GMEE…EKAN and RPEE…EEKP. Phosphoserine is present on residues Ser553 and Ser562. Residues 572-582 are compositionally biased toward basic residues; sequence QKRRSNRQVKR. Lys609 is covalently cross-linked (Glycyl lysine isopeptide (Lys-Gly) (interchain with G-Cter in SUMO)). Chromo domains follow at residues 642–709 and 724–790; these read AIVD…AQMR and VEVD…RVNR. The region spanning 823 to 997 is the Helicase ATP-binding domain; that stretch reads LFNWYNRQNC…FSLLHFLEPS (175 aa). Residue 836–843 coordinates ATP; the sequence is DEMGLGKT. Positions 948–951 match the DEAH box motif; that stretch reads DEAH. The Helicase C-terminal domain occupies 1137-1288; the sequence is LIDKLLPKLK…KAVLQSMSGR (152 aa). 2 positions are modified to phosphoserine: Ser1420 and Ser1424. Residues 1692 to 1712 form a disordered region; sequence EDPEYKPLQGPPKDQDDEGDP. Positions 1789–2302 are interaction with FAM124B; the sequence is IARREKQQRW…LVELEVECME (514 aa). A phosphoserine mark is found at Ser1976 and Ser1978. The segment at 1991–2116 is disordered; the sequence is SRTASPLPLR…TDQSRSKLYD (126 aa). The residue at position 1993 (Thr1993) is a Phosphothreonine. Phosphoserine is present on residues Ser1995 and Ser2008. The span at 2011 to 2021 shows a compositional bias: polar residues; sequence ETATQVPSLES. A Glycyl lysine isopeptide (Lys-Gly) (interchain with G-Cter in SUMO2) cross-link involves residue Lys2025. Ser2046 carries the phosphoserine modification. Position 2051 is a phosphothreonine (Thr2051). Residues 2064–2073 show a composition bias toward acidic residues; sequence EDEDDSDSEL. Ser2069 and Ser2071 each carry phosphoserine. The span at 2076 to 2095 shows a compositional bias: low complexity; that stretch reads SKLSPSSSSSSSSSSSSSST. Positions 2103 to 2116 are enriched in basic and acidic residues; it reads EEKLTDQSRSKLYD. Phosphoserine occurs at positions 2182, 2200, and 2202. A disordered region spans residues 2189–2229; the sequence is GILGPGNHLLDSPSLTPGEYGDSPVPTPRSSSAASMAEEEA. The residue at position 2204 (Thr2204) is a Phosphothreonine. Phosphoserine is present on Ser2211. Thr2215 carries the phosphothreonine modification. A compositionally biased stretch (low complexity) spans 2218-2229; sequence SSSAASMAEEEA. At Ser2223 the chain carries Phosphoserine. Lys2256 participates in a covalent cross-link: Glycyl lysine isopeptide (Lys-Gly) (interchain with G-Cter in SUMO2). Residues 2481 to 2581 are disordered; it reads PSSPHVDSST…NSDSSEDADD (101 aa). Over residues 2492–2510 the composition is skewed to basic residues; the sequence is LHHHHHHPHPHHHHHHHPG. Position 2519 is a phosphoserine (Ser2519). Polar residues predominate over residues 2519 to 2528; it reads SPVTTASGTT. Over residues 2536 to 2550 the composition is skewed to acidic residues; sequence PEEDDDEDEEDDDDL.

This sequence belongs to the SNF2/RAD54 helicase family. CHD8 subfamily. Interacts with p53/TP53, histone H1, CTNNB1, CTCF and PIAS3. Component of some MLL1/MLL complex, at least composed of the core components KMT2A/MLL1, ASH2L, HCFC1/HCF1, WDR5 and RBBP5, as well as the facultative components BACC1, CHD8, E2F6, HSP70, INO80C, KANSL1, LAS1L, MAX, MCRS1, MGA, KAT8/MOF, PELP1, PHF20, PRP31, RING2, RUVB1/TIP49A, RUVB2/TIP49B, SENP3, TAF1, TAF4, TAF6, TAF7, TAF9 and TEX10. Interacts with CHD7. Interacts with FAM124B. Interacts with TLK2. Interacts with HNRNPL in an RNA-dependent manner. Post-translationally, sumoylated.

Its subcellular location is the nucleus. The catalysed reaction is ATP + H2O = ADP + phosphate + H(+). In terms of biological role, ATP-dependent chromatin-remodeling factor, it slides nucleosomes along DNA; nucleosome sliding requires ATP. Acts as a transcription repressor by remodeling chromatin structure and recruiting histone H1 to target genes. Suppresses p53/TP53-mediated apoptosis by recruiting histone H1 and preventing p53/TP53 transactivation activity. Acts as a negative regulator of Wnt signaling pathway by regulating beta-catenin (CTNNB1) activity. Negatively regulates CTNNB1-targeted gene expression by being recruited specifically to the promoter regions of several CTNNB1 responsive genes. Involved in both enhancer blocking and epigenetic remodeling at chromatin boundary via its interaction with CTCF. Acts as a suppressor of STAT3 activity by suppressing the LIF-induced STAT3 transcriptional activity. Also acts as a transcription activator via its interaction with ZNF143 by participating in efficient U6 RNA polymerase III transcription. Regulates alternative splicing of a core group of genes involved in neuronal differentiation, cell cycle and DNA repair. Enables H3K36me3-coupled transcription elongation and co-transcriptional RNA processing likely via interaction with HNRNPL. This Homo sapiens (Human) protein is Chromodomain-helicase-DNA-binding protein 8.